A 92-amino-acid chain; its full sequence is Defensin-like protein 294 (92 aa).

A signal peptide spans 1–26 (MASRATSLFIFFFLISCTFMLLETNA). Cystine bridges form between Cys63–Cys82, Cys69–Cys87, and Cys75–Cys89.

This sequence belongs to the DEFL family.

The protein localises to the secreted. This is Defensin-like protein 294 from Arabidopsis thaliana (Mouse-ear cress).